Reading from the N-terminus, the 436-residue chain is 3-ketoacyl-CoA thiolase (436 aa).

The active-site Acyl-thioester intermediate is the cysteine 99. Catalysis depends on proton acceptor residues histidine 392 and cysteine 422.

The protein belongs to the thiolase-like superfamily. Thiolase family. In terms of assembly, heterotetramer of two alpha chains (FadJ) and two beta chains (FadI).

It localises to the cytoplasm. The enzyme catalyses an acyl-CoA + acetyl-CoA = a 3-oxoacyl-CoA + CoA. The protein operates within lipid metabolism; fatty acid beta-oxidation. Its function is as follows. Catalyzes the final step of fatty acid oxidation in which acetyl-CoA is released and the CoA ester of a fatty acid two carbons shorter is formed. This is 3-ketoacyl-CoA thiolase from Escherichia coli O1:K1 / APEC.